A 299-amino-acid polypeptide reads, in one-letter code: tRNA dimethylallyltransferase (299 aa).

11 to 18 (GPTAVGKT) provides a ligand contact to ATP. A substrate-binding site is contributed by 13–18 (TAVGKT). Positions 36-39 (DSQQ) are interaction with substrate tRNA.

The protein belongs to the IPP transferase family. In terms of assembly, monomer. Mg(2+) serves as cofactor.

The catalysed reaction is adenosine(37) in tRNA + dimethylallyl diphosphate = N(6)-dimethylallyladenosine(37) in tRNA + diphosphate. Functionally, catalyzes the transfer of a dimethylallyl group onto the adenine at position 37 in tRNAs that read codons beginning with uridine, leading to the formation of N6-(dimethylallyl)adenosine (i(6)A). In Streptococcus pyogenes serotype M1, this protein is tRNA dimethylallyltransferase.